A 616-amino-acid chain; its full sequence is UvrABC system protein C (616 aa).

Residues 11–85 (ASPGVYIFRR…IKQHRPHYNV (75 aa)) enclose the GIY-YIG domain. In terms of domain architecture, UVR spans 194–229 (APVIARLKADMQAAARAQDFEQAARLRDRVQAVEKL).

This sequence belongs to the UvrC family. In terms of assembly, interacts with UvrB in an incision complex.

The protein resides in the cytoplasm. In terms of biological role, the UvrABC repair system catalyzes the recognition and processing of DNA lesions. UvrC both incises the 5' and 3' sides of the lesion. The N-terminal half is responsible for the 3' incision and the C-terminal half is responsible for the 5' incision. This Deinococcus geothermalis (strain DSM 11300 / CIP 105573 / AG-3a) protein is UvrABC system protein C.